A 237-amino-acid chain; its full sequence is V-type proton ATPase subunit E (237 aa).

Belongs to the V-ATPase E subunit family. V-ATPase is a heteromultimeric enzyme composed of a peripheral catalytic V1 complex (components A to H) attached to an integral membrane V0 proton pore complex (components: a, c, c', c'' and d).

Functionally, subunit of the peripheral V1 complex of vacuolar ATPase essential for assembly or catalytic function. V-ATPase is responsible for acidifying a variety of intracellular compartments in eukaryotic cells. In Gossypium hirsutum (Upland cotton), this protein is V-type proton ATPase subunit E (VATE).